Here is a 97-residue protein sequence, read N- to C-terminus: Co-chaperonin GroES (97 aa).

The protein belongs to the GroES chaperonin family. Heptamer of 7 subunits arranged in a ring. Interacts with the chaperonin GroEL.

Its subcellular location is the cytoplasm. Functionally, together with the chaperonin GroEL, plays an essential role in assisting protein folding. The GroEL-GroES system forms a nano-cage that allows encapsulation of the non-native substrate proteins and provides a physical environment optimized to promote and accelerate protein folding. GroES binds to the apical surface of the GroEL ring, thereby capping the opening of the GroEL channel. The protein is Co-chaperonin GroES of Blochmanniella floridana.